We begin with the raw amino-acid sequence, 277 residues long: tRNA uridine(34) hydroxylase (277 aa).

Positions 126–221 (SSPDVHVIDT…YLETMRGDDS (96 aa)) constitute a Rhodanese domain. The active-site Cysteine persulfide intermediate is the Cys-181.

This sequence belongs to the TrhO family.

The enzyme catalyses uridine(34) in tRNA + AH2 + O2 = 5-hydroxyuridine(34) in tRNA + A + H2O. Functionally, catalyzes oxygen-dependent 5-hydroxyuridine (ho5U) modification at position 34 in tRNAs. The sequence is that of tRNA uridine(34) hydroxylase from Anaplasma marginale (strain St. Maries).